The following is a 63-amino-acid chain: Lantipeptide Flvbeta.a (63 aa).

Residues 1-28 (MSEKNMEKAGVVKADELDEMIDETTGGA) constitute a propeptide, cleaved by FlvT. Residues Thr30, Thr33, Thr38, and Thr39 each carry the 2,3-didehydrobutyrine; by FlvM2 modification. The segment at residues 43-49 (SKGLQNC) is a cross-link (lanthionine (Ser-Cys); by FlvM2). Residues Thr54 and Thr55 each carry the 2,3-didehydrobutyrine; by FlvM2 modification.

Post-translationally, maturation of FlvA2 peptides involves the enzymatic conversion of Thr, and Ser into dehydrated AA and the formation of thioether bonds with cysteines. Modifications are processed by the flavecin synthetase FlvM2. This is followed by membrane translocation and cleavage of the modified precursor. In terms of processing, contains DL-lanthionine, when coepressed in E.coli with the flavecin synthetase FlvM2.

The protein localises to the secreted. In terms of biological role, lanthionine-containing peptide that does probably not show antibacterial activity, since its analog [+3]Flvbeta.a does not show antibacterial activity against M.luteus. Also does not show antibiotic activity when tested with [Del2]Flvalpha.a, an analog of Flvalpha.a, which is encoded by the same operon than Flvbeta.a. The bactericidal activity of lantibiotics is based on depolarization of energized bacterial cytoplasmic membranes, initiated by the formation of aqueous transmembrane pores. This is Lantipeptide Flvbeta.a from Ruminococcus flavefaciens.